The sequence spans 123 residues: Nitrogenase-stabilizing/protective protein NifW (123 aa).

The protein belongs to the NifW family. Homotrimer; associates with NifD.

May protect the nitrogenase Fe-Mo protein from oxidative damage. The sequence is that of Nitrogenase-stabilizing/protective protein NifW from Rhodopseudomonas palustris (strain HaA2).